Reading from the N-terminus, the 414-residue chain is MIEVLLVTICLAVFPYQGSSIILESGNVNDYEVVYPRKVTALPKGAVQPKYEDAMQYELKVNGEPVVLHLEKNKELFSKDYSETHYSPDGRKITTNPSVEDHCYYRGRIENDADSTASISACNGLKGHFKLQGEMYLIEPLELSDSEAHAVFKYENVEKEDEAPKMCGVTQNWESYEPIKKASDLNLNPDQQNLPQRYIELVVVADHRVFMKYNSDLNIIRKRVHELVNTINGFYRSLNIDVSLTDLEIWSDQDFITVQSSAKNTLNSFGEWREADLLRRKSHDHAQLLTAINFEGKIIGRAYTSSMCNPRKSVGIVKDHSPINLLVGVTMAHELGHNLGMNHDGDKCLRGASLCIMRPGLTPGRSYEFSDDSMGYYQSFLNQYKPQCILNKPLRIDPVSTPVSGNELLEAGEE.

Positions 1–20 are cleaved as a signal peptide; it reads MIEVLLVTICLAVFPYQGSS. Residues 21 to 190 constitute a propeptide that is removed on maturation; sequence IILESGNVND…KASDLNLNPD (170 aa). Glutamine 191 carries the post-translational modification Pyrrolidone carboxylic acid. One can recognise a Peptidase M12B domain in the interval 197 to 393; the sequence is RYIELVVVAD…YKPQCILNKP (197 aa). Residues glutamate 200 and aspartate 284 each coordinate Ca(2+). 2 disulfide bridges follow: cysteine 308-cysteine 388 and cysteine 348-cysteine 355. Histidine 333 provides a ligand contact to Zn(2+). Glutamate 334 is a catalytic residue. Zn(2+) contacts are provided by histidine 337 and histidine 343. Residues cysteine 388, asparagine 391, valine 403, asparagine 406, leucine 408, glutamate 410, and glutamate 413 each contribute to the Ca(2+) site. A propeptide spanning residues 394–414 is cleaved from the precursor; it reads LRIDPVSTPVSGNELLEAGEE.

Belongs to the venom metalloproteinase (M12B) family. P-I subfamily. As to quaternary structure, monomer. Zn(2+) serves as cofactor. The N-terminus is blocked. In terms of tissue distribution, expressed by the venom gland.

The protein resides in the secreted. The catalysed reaction is Cleavage of 5-His-|-Leu-6, 10-His-|-Leu-11, 14-Ala-|-Leu-15, 16-Tyr-|-Leu-17 and 23-Gly-|-Phe-24 of insulin B chain. Identical to the cleavage of insulin B chain by atrolysin C. Also cleaves Xaa-|-Ser bonds in glucagon.. Snake venom metalloproteinase that impairs hemostasis in the envenomed animal. This Crotalus atrox (Western diamondback rattlesnake) protein is Snake venom metalloproteinase atrolysin-B.